Reading from the N-terminus, the 191-residue chain is Molybdenum cofactor guanylyltransferase (191 aa).

GTP-binding positions include 13–15 (LAG), K26, D72, and D102. D102 serves as a coordination point for Mg(2+).

The protein belongs to the MobA family. As to quaternary structure, monomer. Mg(2+) is required as a cofactor.

Its subcellular location is the cytoplasm. It catalyses the reaction Mo-molybdopterin + GTP + H(+) = Mo-molybdopterin guanine dinucleotide + diphosphate. In terms of biological role, transfers a GMP moiety from GTP to Mo-molybdopterin (Mo-MPT) cofactor (Moco or molybdenum cofactor) to form Mo-molybdopterin guanine dinucleotide (Mo-MGD) cofactor. The chain is Molybdenum cofactor guanylyltransferase from Pseudomonas putida (strain GB-1).